Reading from the N-terminus, the 835-residue chain is Ribosome-releasing factor 2, mitochondrial (835 aa).

Residues Met-1–Tyr-50 constitute a mitochondrion transit peptide. One can recognise a tr-type G domain in the interval Thr-57–Ala-343. GTP is bound by residues Ala-66–Thr-73, Asp-131–His-135, and Asn-183–Asp-186.

It belongs to the TRAFAC class translation factor GTPase superfamily. Classic translation factor GTPase family. EF-G/EF-2 subfamily.

The protein resides in the mitochondrion. In terms of biological role, mitochondrial GTPase that mediates the disassembly of ribosomes from messenger RNA at the termination of mitochondrial protein biosynthesis. Not involved in the GTP-dependent ribosomal translocation step during translation elongation. This is Ribosome-releasing factor 2, mitochondrial from Eremothecium gossypii (strain ATCC 10895 / CBS 109.51 / FGSC 9923 / NRRL Y-1056) (Yeast).